A 468-amino-acid polypeptide reads, in one-letter code: Peroxisome proliferator-activated receptor alpha (468 aa).

Residues 1–20 (MVDTESQICPLSPFGDDDLE) are disordered. The nuclear receptor DNA-binding region spans 99 to 173 (NIECRICGDK…DGMSHNAIRF (75 aa)). 2 NR C4-type zinc fingers span residues 102–122 (CRIC…CEGC) and 139–161 (CDRS…FQKC). One can recognise an NR LBD domain in the interval 239–466 (FVIHDMETLC…HPLLQEIYRD (228 aa)). Residues 304–433 (DQVTLLKYGV…PKLLQKMADL (130 aa)) are required for heterodimerization with RXRA.

It belongs to the nuclear hormone receptor family. NR1 subfamily. As to quaternary structure, heterodimer; with RXRA. This heterodimerization is required for DNA binding and transactivation activity. Interacts with NCOA3 coactivator. Interacts with CITED2; the interaction stimulates its transcriptional activity. Also interacts with PPARBP in vitro. Interacts with AKAP13, LPIN1, PRDM16 and coactivator NCOA6. Interacts with ASXL1 and ASXL2. Interacts with PER2. Interacts with SIRT1; the interaction seems to be modulated by NAD(+) levels. Interacts with CRY1 and CRY2. In hepatocytes, interacts with PAQR3 and HUWE1; the interactions promote PPARA poylubiquitination and HUWE1-mediated degradation. Ubiquitinated by E3 ubiquitin-protein ligase HUWE1; leading to proteasomal degradation. Post-translationally, phosphorylated.

Its subcellular location is the nucleus. Functionally, ligand-activated transcription factor. Key regulator of lipid metabolism. Activated by the endogenous ligand 1-palmitoyl-2-oleoyl-sn-glycerol-3-phosphocholine (16:0/18:1-GPC). Activated by oleylethanolamide, a naturally occurring lipid that regulates satiety. Receptor for peroxisome proliferators such as hypolipidemic drugs and fatty acids. Regulates the peroxisomal beta-oxidation pathway of fatty acids. Functions as a transcription activator for the ACOX1 and P450 genes. Transactivation activity requires heterodimerization with RXRA and is antagonized by NR2C2. May be required for the propagation of clock information to metabolic pathways regulated by PER2. The chain is Peroxisome proliferator-activated receptor alpha (PPARA) from Phascolarctos cinereus (Koala).